We begin with the raw amino-acid sequence, 1363 residues long: DNA-directed RNA polymerase subunit beta (1363 aa).

The protein belongs to the RNA polymerase beta chain family. As to quaternary structure, the RNAP catalytic core consists of 2 alpha, 1 beta, 1 beta' and 1 omega subunit. When a sigma factor is associated with the core the holoenzyme is formed, which can initiate transcription.

The enzyme catalyses RNA(n) + a ribonucleoside 5'-triphosphate = RNA(n+1) + diphosphate. Its function is as follows. DNA-dependent RNA polymerase catalyzes the transcription of DNA into RNA using the four ribonucleoside triphosphates as substrates. This chain is DNA-directed RNA polymerase subunit beta, found in Neorickettsia risticii (Ehrlichia risticii).